Consider the following 228-residue polypeptide: Vesicle transport protein SEC20 (228 aa).

At 1–199 the chain is on the cytoplasmic side; that stretch reads MAAPQDVHVR…LITKYNRREL (199 aa). Residues 37–90 adopt a coiled-coil conformation; the sequence is LSELTELNTKVKEKFQQLKQRIQELEQSAREQDKESEKQLLLQEVENHKKQMLS. A helical; Anchor for type IV membrane protein membrane pass occupies residues 200–220; the sequence is TDKLLIFLALALFLATVLYIV. The Lumenal segment spans residues 221 to 228; sequence KKRLFPFL.

This sequence belongs to the SEC20 family. Component of a SNARE complex consisting of STX18, USE1L, BNIP1/SEC20L and SEC22B. Interacts directly with STX18, RINT1/TIP20L and NAPA. Interacts with ZW10 through RINT1. Interacts with BCL2. Interacts with RNF186. Interacts with RNF185. Interacts with SQSTM1; increased by 'Lys-63'-linked polyubiquitination of BNIP1. Post-translationally, polyubiquitinated. 'Lys-63'-linked polyubiquitination by RNF185 increases the interaction with the autophagy receptor SQSTM1. Undergoes 'Lys-29'- and 'Lys-63'-linked polyubiquitination by RNF186 that may regulate BNIP1 localization to the mitochondrion.

It localises to the endoplasmic reticulum membrane. The protein localises to the mitochondrion membrane. In terms of biological role, as part of a SNARE complex may be involved in endoplasmic reticulum membranes fusion and be required for the maintenance of endoplasmic reticulum organization. Also plays a role in apoptosis. It is for instance required for endoplasmic reticulum stress-induced apoptosis. As a substrate of RNF185 interacting with SQSTM1, might also be involved in mitochondrial autophagy. The protein is Vesicle transport protein SEC20 of Mus musculus (Mouse).